The sequence spans 385 residues: 8-amino-7-oxononanoate synthase (385 aa).

Residue Arg-21 participates in substrate binding. A pyridoxal 5'-phosphate-binding site is contributed by 108–109 (GF). His-133 provides a ligand contact to substrate. Pyridoxal 5'-phosphate contacts are provided by Ser-179, His-207, and Thr-233. Lys-236 carries the N6-(pyridoxal phosphate)lysine modification. Thr-352 is a substrate binding site.

Belongs to the class-II pyridoxal-phosphate-dependent aminotransferase family. BioF subfamily. As to quaternary structure, homodimer. Requires pyridoxal 5'-phosphate as cofactor.

The catalysed reaction is 6-carboxyhexanoyl-[ACP] + L-alanine + H(+) = (8S)-8-amino-7-oxononanoate + holo-[ACP] + CO2. Its pathway is cofactor biosynthesis; biotin biosynthesis. Functionally, catalyzes the decarboxylative condensation of pimeloyl-[acyl-carrier protein] and L-alanine to produce 8-amino-7-oxononanoate (AON), [acyl-carrier protein], and carbon dioxide. This is 8-amino-7-oxononanoate synthase from Salmonella paratyphi C (strain RKS4594).